Consider the following 458-residue polypeptide: MYGKIEKIHFVGIGGIGMSGIAEVLLNLGYKVSGSDLRKTEITERLEGLGGEIFIGHARENVANVDVVVISSAVHDDNPEVVEAMERLIPVIPRAEMLAELMRMKYGIAIAGTHGKTTTTSMVATILAKGGIDPTIVIGGRLNSIGTNARLGQGQFLVAEADESDGSFLKLSPTIAVVTNIDADHLDFYKDIDEIKDTFVQFINKVPFYGLAVLCLDNGNIADIIPLVKKRFNTYGLSTQADFRATDVRHTGFTTSFVAHYKGTLLGEITFSMPGAHNVLNALATIAVAMELNIPFAEIQAGFKAFGGVGRRFQVKGEVRDIMVVDDYGHHPTEIRATLAAAKGGWDRRLVVAFQPHRYSRTKELFEEFVKAFYDADILILTDIYPAGEKPIEGITAESLAARIKRHGQKDVTYIADRNAVCDHLLGIVKPGDIVITLGAGNIWQVGETLVEKLKGDL.

Residue 112 to 118 coordinates ATP; sequence GTHGKTT.

It belongs to the MurCDEF family.

The protein resides in the cytoplasm. It catalyses the reaction UDP-N-acetyl-alpha-D-muramate + L-alanine + ATP = UDP-N-acetyl-alpha-D-muramoyl-L-alanine + ADP + phosphate + H(+). It participates in cell wall biogenesis; peptidoglycan biosynthesis. Its function is as follows. Cell wall formation. The chain is UDP-N-acetylmuramate--L-alanine ligase from Geotalea uraniireducens (strain Rf4) (Geobacter uraniireducens).